The primary structure comprises 251 residues: Ubiquinone/menaquinone biosynthesis C-methyltransferase UbiE (251 aa).

S-adenosyl-L-methionine-binding positions include Thr-74, Asp-95, and 123-124; that span reads NA.

This sequence belongs to the class I-like SAM-binding methyltransferase superfamily. MenG/UbiE family.

It carries out the reaction a 2-demethylmenaquinol + S-adenosyl-L-methionine = a menaquinol + S-adenosyl-L-homocysteine + H(+). The enzyme catalyses a 2-methoxy-6-(all-trans-polyprenyl)benzene-1,4-diol + S-adenosyl-L-methionine = a 5-methoxy-2-methyl-3-(all-trans-polyprenyl)benzene-1,4-diol + S-adenosyl-L-homocysteine + H(+). It participates in quinol/quinone metabolism; menaquinone biosynthesis; menaquinol from 1,4-dihydroxy-2-naphthoate: step 2/2. Its pathway is cofactor biosynthesis; ubiquinone biosynthesis. In terms of biological role, methyltransferase required for the conversion of demethylmenaquinol (DMKH2) to menaquinol (MKH2) and the conversion of 2-polyprenyl-6-methoxy-1,4-benzoquinol (DDMQH2) to 2-polyprenyl-3-methyl-6-methoxy-1,4-benzoquinol (DMQH2). The protein is Ubiquinone/menaquinone biosynthesis C-methyltransferase UbiE of Shewanella oneidensis (strain ATCC 700550 / JCM 31522 / CIP 106686 / LMG 19005 / NCIMB 14063 / MR-1).